Here is a 497-residue protein sequence, read N- to C-terminus: Bypass of stop codon protein 6 (497 aa).

Residues 1–72 (MDASSVPPKV…KVKTYPLNYQ (72 aa)) are Lumenal-facing. A phosphoserine mark is found at Ser37 and Ser41. Asn49 carries N-linked (GlcNAc...) asparagine glycosylation. A helical transmembrane segment spans residues 73–93 (TVPLVKLQVIACLIMFVVFGM). At 94–144 (NDQTVGALLPTLIEYYHISRVDVSNVFIVQLCGYVMASLSKERLNKHFGMR) the chain is on the cytoplasmic side. A helical transmembrane segment spans residues 145 to 165 (GGMLLAAGLCIVFLIILATAP). Over 166-167 (SS) the chain is Lumenal. Residues 168–188 (FYVCMFCGLPLGLGIGILDST) form a helical membrane-spanning segment. Residues 189 to 205 (GNVLMGSLLVHKNELMG) are Cytoplasmic-facing. A helical transmembrane segment spans residues 206–226 (IMHGLYGAAAMVTPPLVSYFV). Residues 227 to 232 (EWGHWS) lie on the Lumenal side of the membrane. A helical transmembrane segment spans residues 233–253 (LFFLIPLFFSIIGMIVIFPAF). Topologically, residues 254–300 (KFETASKYDYLCSVENKESNNDVEEAGDNSLMESTKASPGFFELLRN) are cytoplasmic. Residues 301–321 (PAIFLYSLYLFLYLGAEITTG) traverse the membrane as a helical segment. Topologically, residues 322–340 (SWFFSYLLETKSSNKVAMS) are lumenal. A helical membrane pass occupies residues 341–361 (YIAASFWTGLTVGRLCLGFVT). Over 362-373 (ERFFENEYKASK) the chain is Cytoplasmic. Residues 374 to 394 (AYAFLTLSSYTLFVLVGLINS) form a helical membrane-spanning segment. Topologically, residues 395–397 (SSV) are lumenal. Residues 398 to 418 (FYFVVLFFVVFCCGTFIGPLF) form a helical membrane-spanning segment. The Cytoplasmic segment spans residues 419–439 (PNASIVALQVLPKRLHVSGVG). Residues 440–460 (VAVAVGGCGGAAIPYLAGVIA) form a helical membrane-spanning segment. Residues 461-462 (HT) lie on the Lumenal side of the membrane. The helical transmembrane segment at 463 to 483 (VGIQYIPLLCWIMVALFTLEW) threads the bilayer. Residues 484-497 (TLYPKFIKGHEEYF) are Cytoplasmic-facing.

Belongs to the major facilitator superfamily.

It is found in the golgi apparatus. The protein resides in the cis-Golgi network membrane. Its function is as follows. Probable transporter. This chain is Bypass of stop codon protein 6 (BSC6), found in Saccharomyces cerevisiae (strain ATCC 204508 / S288c) (Baker's yeast).